The primary structure comprises 321 residues: Lipoyl synthase (321 aa).

Residues cysteine 68, cysteine 73, cysteine 79, cysteine 94, cysteine 98, cysteine 101, and serine 308 each contribute to the [4Fe-4S] cluster site. The Radical SAM core domain maps to 80 to 297 (FNHGTATFMI…KALADELGFT (218 aa)).

Belongs to the radical SAM superfamily. Lipoyl synthase family. It depends on [4Fe-4S] cluster as a cofactor.

It localises to the cytoplasm. It carries out the reaction [[Fe-S] cluster scaffold protein carrying a second [4Fe-4S](2+) cluster] + N(6)-octanoyl-L-lysyl-[protein] + 2 oxidized [2Fe-2S]-[ferredoxin] + 2 S-adenosyl-L-methionine + 4 H(+) = [[Fe-S] cluster scaffold protein] + N(6)-[(R)-dihydrolipoyl]-L-lysyl-[protein] + 4 Fe(3+) + 2 hydrogen sulfide + 2 5'-deoxyadenosine + 2 L-methionine + 2 reduced [2Fe-2S]-[ferredoxin]. It functions in the pathway protein modification; protein lipoylation via endogenous pathway; protein N(6)-(lipoyl)lysine from octanoyl-[acyl-carrier-protein]: step 2/2. In terms of biological role, catalyzes the radical-mediated insertion of two sulfur atoms into the C-6 and C-8 positions of the octanoyl moiety bound to the lipoyl domains of lipoate-dependent enzymes, thereby converting the octanoylated domains into lipoylated derivatives. The chain is Lipoyl synthase from Shewanella putrefaciens (strain CN-32 / ATCC BAA-453).